We begin with the raw amino-acid sequence, 387 residues long: 3-ketoacyl-CoA thiolase (387 aa).

The Acyl-thioester intermediate role is filled by Cys-91. Residues His-343 and Cys-373 each act as proton acceptor in the active site.

The protein belongs to the thiolase-like superfamily. Thiolase family. As to quaternary structure, heterotetramer of two alpha chains (FadB) and two beta chains (FadA).

Its subcellular location is the cytoplasm. It carries out the reaction an acyl-CoA + acetyl-CoA = a 3-oxoacyl-CoA + CoA. Its pathway is lipid metabolism; fatty acid beta-oxidation. Its function is as follows. Catalyzes the final step of fatty acid oxidation in which acetyl-CoA is released and the CoA ester of a fatty acid two carbons shorter is formed. The protein is 3-ketoacyl-CoA thiolase of Shewanella loihica (strain ATCC BAA-1088 / PV-4).